The sequence spans 794 residues: Zinc finger protein 148 (794 aa).

A Glycyl lysine isopeptide (Lys-Gly) (interchain with G-Cter in SUMO2) cross-link involves residue Lys-6. At Ser-51 the chain carries Phosphoserine. Residues Lys-88, Lys-115, and Lys-132 each participate in a glycyl lysine isopeptide (Lys-Gly) (interchain with G-Cter in SUMO2) cross-link. The C2H2-type 1 zinc finger occupies 171-193 (HVCEHCNAAFRTNYHLQRHVFIH). Thr-194 is modified (phosphothreonine). C2H2-type zinc fingers lie at residues 199–221 (FQCSQCDMRFIQKYLLQRHEKIH) and 227–249 (FRCDECGMRFIQKYHMERHKRTH). Ser-250 carries the post-translational modification Phosphoserine. Residues 255-278 (YQCEYCLQYFSRTDRVLKHKRMCH) form a C2H2-type 4 zinc finger. Lys-291 is covalently cross-linked (Glycyl lysine isopeptide (Lys-Gly) (interchain with G-Cter in SUMO2)). The disordered stretch occupies residues 298–336 (EEDSGFSTSPKDNSLPKKKRQKTEKKSSGMDKESALDKS). Residues Ser-301 and Ser-306 each carry the phosphoserine modification. Lys-308 is covalently cross-linked (Glycyl lysine isopeptide (Lys-Gly) (interchain with G-Cter in SUMO2)). Basic and acidic residues predominate over residues 321–336 (EKKSSGMDKESALDKS). A Glycyl lysine isopeptide (Lys-Gly) (interchain with G-Cter in SUMO1); alternate cross-link involves residue Lys-356. A Glycyl lysine isopeptide (Lys-Gly) (interchain with G-Cter in SUMO2); alternate cross-link involves residue Lys-356. Lys-402 is covalently cross-linked (Glycyl lysine isopeptide (Lys-Gly) (interchain with G-Cter in SUMO2)). Ser-412 is subject to Phosphoserine. Glycyl lysine isopeptide (Lys-Gly) (interchain with G-Cter in SUMO2) cross-links involve residues Lys-421 and Lys-424. The segment covering 574 to 588 (NSSEVPEVTPSENVG) has biased composition (polar residues). Positions 574–596 (NSSEVPEVTPSENVGSSSQASSS) are disordered. Lys-607 bears the N6-acetyllysine mark. 2 positions are modified to phosphoserine: Ser-665 and Ser-784.

The protein belongs to the krueppel C2H2-type zinc-finger protein family. Interacts with HNRNPDL. Interacts with the 5FMC complex; the interaction requires association with CHTOP. Interacts with CAVIN1. In terms of processing, sumoylated with SUMO2. Desumoylated by SENP3, resulting in the stimulation of transcription of its target genes.

The protein localises to the nucleus. Its function is as follows. Involved in transcriptional regulation. Represses the transcription of a number of genes including gastrin, stromelysin and enolase. Binds to the G-rich box in the enhancer region of these genes. The polypeptide is Zinc finger protein 148 (ZNF148) (Homo sapiens (Human)).